A 185-amino-acid chain; its full sequence is Elongation factor P (185 aa).

Belongs to the elongation factor P family.

The protein localises to the cytoplasm. Its pathway is protein biosynthesis; polypeptide chain elongation. Functionally, involved in peptide bond synthesis. Stimulates efficient translation and peptide-bond synthesis on native or reconstituted 70S ribosomes in vitro. Probably functions indirectly by altering the affinity of the ribosome for aminoacyl-tRNA, thus increasing their reactivity as acceptors for peptidyl transferase. This chain is Elongation factor P, found in Fervidobacterium nodosum (strain ATCC 35602 / DSM 5306 / Rt17-B1).